The following is a 753-amino-acid chain: Bifunctional terpene synthase FUP1 (753 aa).

The segment at 1–329 is terpene cyclase; sequence MGPLLYRSRH…CSACPRQNAW (329 aa). D96 is a binding site for Mg(2+). A DDXXD 1 motif is present at residues 96–100; sequence DDTGE. Residues 231 to 239 carry the NSE/DTE motif; that stretch reads NDYFSWERE. A prenyltransferase region spans residues 330–745; sequence KNDTLSNGQN…MLRLCLAKLS (416 aa). Isopentenyl diphosphate contacts are provided by K461, R464, and H493. D500 and D504 together coordinate Mg(2+). The DDXXD 2 motif lies at 500 to 504; it reads DDLED. R509 provides a ligand contact to dimethylallyl diphosphate. Isopentenyl diphosphate is bound at residue R510. Residues K587, T588, Q625, N632, K640, and K650 each contribute to the dimethylallyl diphosphate site.

It in the N-terminal section; belongs to the terpene synthase family. In the C-terminal section; belongs to the FPP/GGPP synthase family. In terms of assembly, hexamer. It depends on Mg(2+) as a cofactor.

It carries out the reaction isopentenyl diphosphate + (2E,6E)-farnesyl diphosphate = (2E,6E,10E)-geranylgeranyl diphosphate + diphosphate. It participates in secondary metabolite biosynthesis; terpenoid biosynthesis. Its function is as follows. Bifunctional terpene synthase; part of the gene cluster that mediates the biosynthesis of the mycotoxin fusaproliferin (FUP) that belongs to the class of bicyclic sesterterpenoids. The FUP biosynthetic pathway starts with the enzyme encoded by FUP1 that combines a C-terminal prenyltransferase domain responsible for the synthesis of geranylgeranyl diphosphate with the N-terminal terpene cyclase domain, to yield preterpestacin I. Preterpestacin I is then decorated by oxygenation steps that are catalyzed by two cytochrome P450 monooxygenases. First, FUP2 introduces a hydroxyl group at the C-24 position resulting in the formation of preterpestacin IIa, which can be further oxidized. The second P450 monooxygenase catalyzes the hydroxylation at C-16 and C-17 of preterpestacin IIa, producing preterpestacin III. Subsequently, the FAD-dependent oxidoreductase FUP4 catalyzes the oxidation of the hydroxy group at the C-16 position to a keto group, leading to the formation of (-)-terpestacin, which is the immediate precursor of FUP. The final step in the proposed biosynthetic pathway is the addition of an acetyl group at the C-24 position of terpestacin, which is catalyzed by the acetyltransferase FUP5. The chain is Bifunctional terpene synthase FUP1 from Fusarium proliferatum (strain ET1) (Orchid endophyte fungus).